We begin with the raw amino-acid sequence, 648 residues long: Exoribonuclease 2 (648 aa).

Residues 191 to 518 (RIDLTYLDFI…INHRLIKSII (328 aa)) form the RNB domain. Residues 565–647 (KKKYQANIID…GNKKIIATMI (83 aa)) enclose the S1 motif domain.

Belongs to the RNR ribonuclease family. RNase II subfamily.

The protein resides in the cytoplasm. The enzyme catalyses Exonucleolytic cleavage in the 3'- to 5'-direction to yield nucleoside 5'-phosphates.. Functionally, involved in mRNA degradation. Hydrolyzes single-stranded polyribonucleotides processively in the 3' to 5' direction. The sequence is that of Exoribonuclease 2 from Buchnera aphidicola subsp. Cinara cedri (strain Cc).